Here is a 406-residue protein sequence, read N- to C-terminus: Probable delta-aminolevulinic acid dehydratase 2, chloroplastic (406 aa).

A chloroplast-targeting transit peptide spans 1–34 (MTSSMFRSPCKIPSVKGFEQKSYVGLKAASYNVR). K275 (schiff-base intermediate with substrate) is an active-site residue. R285 and K291 together coordinate 5-aminolevulinate. Mg(2+) is bound at residue E307. K322 functions as the Schiff-base intermediate with substrate in the catalytic mechanism. 5-aminolevulinate contacts are provided by S348 and Y387.

It belongs to the ALAD family. Homooctamer. It depends on Mg(2+) as a cofactor.

The protein localises to the plastid. Its subcellular location is the chloroplast. The enzyme catalyses 2 5-aminolevulinate = porphobilinogen + 2 H2O + H(+). Its pathway is porphyrin-containing compound metabolism; protoporphyrin-IX biosynthesis; coproporphyrinogen-III from 5-aminolevulinate: step 1/4. It participates in porphyrin-containing compound metabolism; chlorophyll biosynthesis. Its function is as follows. Catalyzes an early step in the biosynthesis of tetrapyrroles. Binds two molecules of 5-aminolevulinate per subunit, each at a distinct site, and catalyzes their condensation to form porphobilinogen. The polypeptide is Probable delta-aminolevulinic acid dehydratase 2, chloroplastic (HEMB2) (Arabidopsis thaliana (Mouse-ear cress)).